Here is a 211-residue protein sequence, read N- to C-terminus: FMN-dependent NADH:quinone oxidoreductase 3 (211 aa).

102 to 105 (MWNF) contributes to the FMN binding site.

It belongs to the azoreductase type 1 family. Homodimer. It depends on FMN as a cofactor.

It catalyses the reaction 2 a quinone + NADH + H(+) = 2 a 1,4-benzosemiquinone + NAD(+). It carries out the reaction N,N-dimethyl-1,4-phenylenediamine + anthranilate + 2 NAD(+) = 2-(4-dimethylaminophenyl)diazenylbenzoate + 2 NADH + 2 H(+). Functionally, quinone reductase that provides resistance to thiol-specific stress caused by electrophilic quinones. Its function is as follows. Also exhibits azoreductase activity. Catalyzes the reductive cleavage of the azo bond in aromatic azo compounds to the corresponding amines. The protein is FMN-dependent NADH:quinone oxidoreductase 3 of Bacillus anthracis.